A 161-amino-acid chain; its full sequence is ATP synthase subunit b' (161 aa).

Residues 26-45 (LPLMAIQFLLLAFVLDKIFY) form a helical membrane-spanning segment.

It belongs to the ATPase B chain family. F-type ATPases have 2 components, F(1) - the catalytic core - and F(0) - the membrane proton channel. F(1) has five subunits: alpha(3), beta(3), gamma(1), delta(1), epsilon(1). F(0) has four main subunits: a(1), b(1), b'(1) and c(10-14). The alpha and beta chains form an alternating ring which encloses part of the gamma chain. F(1) is attached to F(0) by a central stalk formed by the gamma and epsilon chains, while a peripheral stalk is formed by the delta, b and b' chains.

The protein localises to the cellular thylakoid membrane. In terms of biological role, f(1)F(0) ATP synthase produces ATP from ADP in the presence of a proton or sodium gradient. F-type ATPases consist of two structural domains, F(1) containing the extramembraneous catalytic core and F(0) containing the membrane proton channel, linked together by a central stalk and a peripheral stalk. During catalysis, ATP synthesis in the catalytic domain of F(1) is coupled via a rotary mechanism of the central stalk subunits to proton translocation. Component of the F(0) channel, it forms part of the peripheral stalk, linking F(1) to F(0). The b'-subunit is a diverged and duplicated form of b found in plants and photosynthetic bacteria. The sequence is that of ATP synthase subunit b' from Trichodesmium erythraeum (strain IMS101).